Reading from the N-terminus, the 168-residue chain is S-ribosylhomocysteine lyase (168 aa).

Fe cation is bound by residues His-54, His-58, and Cys-128.

The protein belongs to the LuxS family. Homodimer. Fe cation is required as a cofactor.

The enzyme catalyses S-(5-deoxy-D-ribos-5-yl)-L-homocysteine = (S)-4,5-dihydroxypentane-2,3-dione + L-homocysteine. Involved in the synthesis of autoinducer 2 (AI-2) which is secreted by bacteria and is used to communicate both the cell density and the metabolic potential of the environment. The regulation of gene expression in response to changes in cell density is called quorum sensing. Catalyzes the transformation of S-ribosylhomocysteine (RHC) to homocysteine (HC) and 4,5-dihydroxy-2,3-pentadione (DPD). The sequence is that of S-ribosylhomocysteine lyase from Histophilus somni (strain 2336) (Haemophilus somnus).